The following is a 310-amino-acid chain: HPr kinase/phosphorylase (310 aa).

Active-site residues include His-138 and Lys-159. Position 153-160 (153-160 (GASGIGKS)) interacts with ATP. Ser-160 is a Mg(2+) binding site. The active-site Proton acceptor; for phosphorylation activity. Proton donor; for dephosphorylation activity is the Asp-177. The tract at residues 201 to 210 (IEIRGVGIID) is important for the catalytic mechanism of both phosphorylation and dephosphorylation. Mg(2+) is bound at residue Glu-202. The active site involves Arg-243. The segment at 264–269 (PVKTGR) is important for the catalytic mechanism of dephosphorylation.

The protein belongs to the HPrK/P family. Homohexamer. Requires Mg(2+) as cofactor.

It catalyses the reaction [HPr protein]-L-serine + ATP = [HPr protein]-O-phospho-L-serine + ADP + H(+). The enzyme catalyses [HPr protein]-O-phospho-L-serine + phosphate + H(+) = [HPr protein]-L-serine + diphosphate. Its function is as follows. Catalyzes the ATP- as well as the pyrophosphate-dependent phosphorylation of a specific serine residue in HPr, a phosphocarrier protein of the phosphoenolpyruvate-dependent sugar phosphotransferase system (PTS). HprK/P also catalyzes the pyrophosphate-producing, inorganic phosphate-dependent dephosphorylation (phosphorolysis) of seryl-phosphorylated HPr (P-Ser-HPr). The two antagonistic activities of HprK/P are regulated by several intracellular metabolites, which change their concentration in response to the absence or presence of rapidly metabolisable carbon sources (glucose, fructose, etc.) in the growth medium. Therefore, by controlling the phosphorylation state of HPr, HPrK/P is a sensor enzyme that plays a major role in the regulation of carbon metabolism and sugar transport: it mediates carbon catabolite repression (CCR), and regulates PTS-catalyzed carbohydrate uptake and inducer exclusion. The polypeptide is HPr kinase/phosphorylase (Lactococcus lactis subsp. cremoris (strain MG1363)).